The sequence spans 452 residues: Pup--protein ligase (452 aa).

Residue Glu9 coordinates Mg(2+). An ATP-binding site is contributed by Arg53. Mg(2+) is bound at residue Tyr55. The active-site Proton acceptor is the Asp57. Glu63 contacts Mg(2+). ATP contacts are provided by Thr66 and Trp419.

It belongs to the Pup ligase/Pup deamidase family. Pup-conjugating enzyme subfamily.

It carries out the reaction ATP + [prokaryotic ubiquitin-like protein]-L-glutamate + [protein]-L-lysine = ADP + phosphate + N(6)-([prokaryotic ubiquitin-like protein]-gamma-L-glutamyl)-[protein]-L-lysine.. It participates in protein degradation; proteasomal Pup-dependent pathway. It functions in the pathway protein modification; protein pupylation. Catalyzes the covalent attachment of the prokaryotic ubiquitin-like protein modifier Pup to the proteasomal substrate proteins, thereby targeting them for proteasomal degradation. This tagging system is termed pupylation. The ligation reaction involves the side-chain carboxylate of the C-terminal glutamate of Pup and the side-chain amino group of a substrate lysine. The protein is Pup--protein ligase of Mycobacterium avium (strain 104).